The primary structure comprises 675 residues: Neurexin-3b-beta (675 aa).

An N-terminal signal peptide occupies residues M1–G30. Residues S31–T599 are Extracellular-facing. Residues A81 to V281 enclose the Laminin G-like domain. Disordered regions lie at residues T313–S337 and F490–R534. Over residues S325–I335 the composition is skewed to polar residues. A helical transmembrane segment spans residues G600–M620. Topologically, residues Y621–V675 are cytoplasmic. The disordered stretch occupies residues N642 to V675. Residues R665–V675 show a composition bias toward basic and acidic residues.

Belongs to the neurexin family. Processed by alpha-secretase leading to the formation of an extracellular soluble protein as well as a C-terminal membrane-embedded fragment (CTF). Proteolysis of these CTFs by gamma-secretase releases intracellular domains (ICDs) and extracellular peptides.

It localises to the membrane. In terms of biological role, neuronal cell surface protein that may be involved in cell recognition and cell adhesion. The chain is Neurexin-3b-beta (nrxn3b) from Danio rerio (Zebrafish).